We begin with the raw amino-acid sequence, 716 residues long: Protein C-mannosyl-transferase DPY19L3 (716 aa).

Residues methionine 1 to lysine 43 are Cytoplasmic-facing. Residues isoleucine 44 to tyrosine 64 form a helical membrane-spanning segment. At leucine 65–glutamate 154 the chain is on the lumenal side. An N-linked (GlcNAc...) asparagine glycan is attached at asparagine 118. Residues proline 155–serine 182 traverse the membrane as a helical segment. Residues glycine 183 to threonine 184 are Cytoplasmic-facing. An intramembrane region (name=3) is located at residues tryptophan 185–threonine 197. At asparagine 198–tryptophan 215 the chain is on the cytoplasmic side. Positions alanine 216–phenylalanine 230 form an intramembrane region, name=4. Over leucine 231–serine 239 the chain is Cytoplasmic. The chain crosses the membrane as a helical span at residues glutamate 240 to leucine 256. Residues threonine 257–glutamine 262 are Lumenal-facing. A helical membrane pass occupies residues phenylalanine 263–aspartate 279. Residues methionine 280–leucine 289 lie on the Cytoplasmic side of the membrane. The chain crosses the membrane as a helical span at residues tyrosine 290–phenylalanine 306. At asparagine 307–serine 308 the chain is on the lumenal side. The chain crosses the membrane as a helical span at residues methionine 309–phenylalanine 323. Over isoleucine 324–leucine 338 the chain is Cytoplasmic. A helical membrane pass occupies residues asparagine 339–asparagine 359. At asparagine 360–aspartate 414 the chain is on the lumenal side. A helical membrane pass occupies residues threonine 415–phenylalanine 437. Over histidine 438–tyrosine 465 the chain is Cytoplasmic. Residues asparagine 466–tyrosine 485 form a helical membrane-spanning segment. The Lumenal segment spans residues leucine 486–tryptophan 487. The chain crosses the membrane as a helical span at residues threonine 488–leucine 499. Residues cysteine 500–isoleucine 522 lie on the Cytoplasmic side of the membrane. A helical transmembrane segment spans residues methionine 523–phenylalanine 539. Over tryptophan 540–lysine 716 the chain is Lumenal. Asparagine 704 carries an N-linked (GlcNAc...) asparagine glycan.

It belongs to the dpy-19 family. As to expression, widely expressed.

It localises to the endoplasmic reticulum membrane. The enzyme catalyses L-tryptophyl-[protein] + a di-trans,poly-cis-dolichyl beta-D-mannosyl phosphate = C-alpha-D-mannosyl-L-tryptophyl-[protein] + a di-trans,poly-cis-dolichyl phosphate + H(+). Its pathway is protein modification; protein glycosylation. C-mannosyltransferase that mediates C-mannosylation of tryptophan residues on target proteins. The reaction occurs on the luminal side of the endoplasmic reticulum and involves the transfer of a mannose unit from a dolichylphosphate mannose (Dol-P-Man) donor to an acceptor protein containing a WxxW or WxxC consensus sequence. C-mannosylates RSPO1, a Wnt signaling regulator, preferentially at the first Trp residue in the sequence WxxW. C-mannosylates the netrin receptor UNC5A, preferentially at the third tryptophan of WxxWxxWxxC sequence. In terms of biological role, has no C-mannosyltransferase activity. The sequence is that of Protein C-mannosyl-transferase DPY19L3 (DPY19L3) from Homo sapiens (Human).